We begin with the raw amino-acid sequence, 377 residues long: DNA methyltransferase CcrM (377 aa).

One can recognise an RAMA domain in the interval 271 to 373 (LGKAELTVMT…LRKVIRDQMA (103 aa)).

Belongs to the N(4)/N(6)-methyltransferase family.

The enzyme catalyses a 2'-deoxyadenosine in DNA + S-adenosyl-L-methionine = an N(6)-methyl-2'-deoxyadenosine in DNA + S-adenosyl-L-homocysteine + H(+). In terms of biological role, a beta subtype methylase that recognizes the double-stranded sequence 5'-GANTC-3' and methylates A-2 on both strands. CcrM-mediated methylation has important cellular functions. Contributes to the accurate cell-cycle control of DNA replication and cellular morphology. This is DNA methyltransferase CcrM (ccrM) from Brucella anthropi (strain ATCC 49188 / DSM 6882 / CCUG 24695 / JCM 21032 / LMG 3331 / NBRC 15819 / NCTC 12168 / Alc 37) (Ochrobactrum anthropi).